The chain runs to 265 residues: Chlorophyll a-b binding protein 1A, chloroplastic (265 aa).

The N-terminal 34 residues, 1-34, are a transit peptide targeting the chloroplast; the sequence is MAAAAMALSSPSFAGQAVKLSPSASENSGNGRIT. A helical transmembrane segment spans residues 151-171; that stretch reads LVHAQSILAIWACQVVLMGAV. 6 residues coordinate chlorophyll b: Val152, Ser156, Gln164, Glu172, Arg175, and Leu181. Residues Lys212, Glu213, Asn216, Arg218, Gln230, His245, and Ala254 each contribute to the chlorophyll a site. Residues 219–239 form a helical membrane-spanning segment; that stretch reads LAMFSMFGFFVQAIVTGKGPL. Phe261 lines the chlorophyll b pocket.

This sequence belongs to the light-harvesting chlorophyll a/b-binding (LHC) protein family. In terms of assembly, the LHC complex consists of chlorophyll a-b binding proteins. Binds at least 14 chlorophylls (8 Chl-a and 6 Chl-b) and carotenoids such as lutein and neoxanthin. is required as a cofactor. Photoregulated by reversible phosphorylation of its threonine residues.

Its subcellular location is the plastid. It is found in the chloroplast thylakoid membrane. Functionally, the light-harvesting complex (LHC) functions as a light receptor, it captures and delivers excitation energy to photosystems with which it is closely associated. In Solanum lycopersicum (Tomato), this protein is Chlorophyll a-b binding protein 1A, chloroplastic (CAB1A).